Reading from the N-terminus, the 427-residue chain is Peptidase B (427 aa).

Residues lysine 195 and aspartate 200 each contribute to the Mn(2+) site. Residue lysine 207 is part of the active site. Mn(2+)-binding residues include aspartate 218, aspartate 277, and glutamate 279. Arginine 281 is an active-site residue.

The protein belongs to the peptidase M17 family. As to quaternary structure, homohexamer. Requires Mn(2+) as cofactor.

Its subcellular location is the cytoplasm. It catalyses the reaction Release of an N-terminal amino acid, Xaa, from a peptide or arylamide. Xaa is preferably Glu or Asp but may be other amino acids, including Leu, Met, His, Cys and Gln.. In terms of biological role, probably plays an important role in intracellular peptide degradation. In Shigella flexneri, this protein is Peptidase B.